The primary structure comprises 274 residues: Large ribosomal subunit protein uL2cz/uL2cy (274 aa).

Disordered stretches follow at residues 1 to 21 (MAIH…VDSQ) and 224 to 274 (NPVD…RRSK).

This sequence belongs to the universal ribosomal protein uL2 family. Part of the 50S ribosomal subunit.

It localises to the plastid. The protein localises to the chloroplast. This chain is Large ribosomal subunit protein uL2cz/uL2cy (rpl2-A), found in Gossypium hirsutum (Upland cotton).